The following is a 377-amino-acid chain: Membrane progestin receptor epsilon (377 aa).

The disordered stretch occupies residues 1 to 40 (MPRRLQPRGAGTKGPPAPAPAASGAARNSHSAASRDPPAS). The Cytoplasmic portion of the chain corresponds to 1-86 (MPRRLQPRGA…VLKPTNETLN (86 aa)). Over residues 9–26 (GAGTKGPPAPAPAASGAA) the composition is skewed to low complexity. A helical transmembrane segment spans residues 87 to 107 (FWTHFIPLLLFLSKFCRLFFL). The Extracellular portion of the chain corresponds to 108–116 (SGGDVPFHH). Residues 117–137 (PWLLPLWCYASGVLLTFAMSC) traverse the membrane as a helical segment. The Cytoplasmic portion of the chain corresponds to 138 to 162 (TAHVFSCLSLRLRAAFFYLDYASIS). The chain crosses the membrane as a helical span at residues 163 to 183 (YYGFGSTVAYYYYLLPGLSLL). Residues 184–205 (DARVMTPYLQQRLGWHVDCTRL) lie on the Extracellular side of the membrane. The helical transmembrane segment at 206–226 (IAAYRALVLPVAFVLAVACTV) threads the bilayer. Residues 227 to 243 (ACCKSRTDWCTYPFALR) are Cytoplasmic-facing. A helical membrane pass occupies residues 244 to 264 (TFVFVMPLSMACPIMLESWLF). The Extracellular segment spans residues 265 to 301 (DLRGENPTLFVHFYRRYFWLVVAAFFNVSKIPERIQP). Residues 302 to 322 (GLFDIIGHSHQLFHIFTFLSI) traverse the membrane as a helical segment. The Cytoplasmic portion of the chain corresponds to 323–343 (YDQVYYVEEGLRQFLQAPPAA). The helical transmembrane segment at 344–364 (PTFSGTVGYMLLLVVCLGLVI) threads the bilayer. At 365 to 377 (RKFLNSSEFCSKK) the chain is on the extracellular side.

Belongs to the ADIPOR family. As to quaternary structure, homodimer. As to expression, expression levels vary widely in a range of tissues. Expressed in the brain, at high level in the pituitary gland and also in hypothalamus, limbic system, caudate nucleus accumens, pons and olfactory bulb.

It is found in the cell membrane. Its function is as follows. Plasma membrane progesterone (P4) receptor coupled to G proteins. Seems to act through a G(s) mediated pathway. May be involved in regulating rapid P4 signaling in the nervous system. Also binds dehydroepiandrosterone (DHEA), pregnanolone, pregnenolone and allopregnanolone. The protein is Membrane progestin receptor epsilon of Homo sapiens (Human).